A 390-amino-acid chain; its full sequence is 3-ketoacyl-CoA thiolase (390 aa).

The active-site Acyl-thioester intermediate is Cys95. Residues His346 and Cys376 each act as proton acceptor in the active site.

Belongs to the thiolase-like superfamily. Thiolase family. In terms of assembly, heterotetramer of two alpha chains (FadB) and two beta chains (FadA).

It is found in the cytoplasm. The enzyme catalyses an acyl-CoA + acetyl-CoA = a 3-oxoacyl-CoA + CoA. Its pathway is lipid metabolism; fatty acid beta-oxidation. In terms of biological role, catalyzes the final step of fatty acid oxidation in which acetyl-CoA is released and the CoA ester of a fatty acid two carbons shorter is formed. The sequence is that of 3-ketoacyl-CoA thiolase from Acinetobacter baumannii (strain AB307-0294).